Reading from the N-terminus, the 367-residue chain is sn-glycerol-3-phosphate import ATP-binding protein UgpC (367 aa).

The ABC transporter domain maps to 4-235; sequence LSLRNVQKTY…PASTFVAGFI (232 aa). Residue 37 to 44 participates in ATP binding; the sequence is GPSGCGKS.

The protein belongs to the ABC transporter superfamily. sn-glycerol-3-phosphate importer (TC 3.A.1.1.3) family. In terms of assembly, the complex is composed of two ATP-binding proteins (UgpC), two transmembrane proteins (UgpA and UgpE) and a solute-binding protein (UgpB).

The protein localises to the cell inner membrane. The catalysed reaction is sn-glycerol 3-phosphate(out) + ATP + H2O = sn-glycerol 3-phosphate(in) + ADP + phosphate + H(+). Functionally, part of the ABC transporter complex UgpBAEC involved in sn-glycerol-3-phosphate (G3P) import. Responsible for energy coupling to the transport system. This chain is sn-glycerol-3-phosphate import ATP-binding protein UgpC, found in Cupriavidus metallidurans (strain ATCC 43123 / DSM 2839 / NBRC 102507 / CH34) (Ralstonia metallidurans).